The chain runs to 470 residues: Cell division protein FtsA (470 aa).

A disordered region spans residues 416–470 (NKKDTHENEVESTDEEIYQSEDNHQEHKQNHEHVQDKDKDKEESKFKKLMKSLFE). Residues 425–434 (VESTDEEIYQ) are compositionally biased toward acidic residues. Residues 436–461 (EDNHQEHKQNHEHVQDKDKDKEESKF) are compositionally biased toward basic and acidic residues.

The protein belongs to the FtsA/MreB family. Self-interacts. Interacts with FtsZ.

Its subcellular location is the cell membrane. In terms of biological role, cell division protein that is involved in the assembly of the Z ring. May serve as a membrane anchor for the Z ring. This Staphylococcus aureus (strain MSSA476) protein is Cell division protein FtsA.